Consider the following 79-residue polypeptide: Sec-independent protein translocase protein TatA (79 aa).

The chain crosses the membrane as a helical span at residues 1 to 21; that stretch reads MGEFSLTHILLLAVIFLIFFG. The disordered stretch occupies residues 52 to 79; it reads DIHDNQQVSHQNKQSMGQTQKQGENQNS. Residues 56 to 79 are compositionally biased toward polar residues; sequence NQQVSHQNKQSMGQTQKQGENQNS.

Belongs to the TatA/E family. As to quaternary structure, the Tat system comprises two distinct complexes: a TatABC complex, containing multiple copies of TatA, TatB and TatC subunits, and a separate TatA complex, containing only TatA subunits. Substrates initially bind to the TatABC complex, which probably triggers association of the separate TatA complex to form the active translocon.

It is found in the cell inner membrane. Part of the twin-arginine translocation (Tat) system that transports large folded proteins containing a characteristic twin-arginine motif in their signal peptide across membranes. TatA could form the protein-conducting channel of the Tat system. The sequence is that of Sec-independent protein translocase protein TatA from Bdellovibrio bacteriovorus (strain ATCC 15356 / DSM 50701 / NCIMB 9529 / HD100).